The sequence spans 1861 residues: MPKLSQQAPLVSSGSGVIASQTFADLIRAALRDILLHRLDLPALVGHLTGIFGLSSNESFVITPVSTNVATGLVAATAKAVGKTGSVDNEIMEAVALAGSRGTSARTHDSKIAIIGMSGRFPEAADLDSFWSLLVQGVDAYRPVAPDRFDAHAHYDETGRRKNTSKVLGGCWINQPGLFDPKFFSISPKEAEQSDPAQRLALQTAYEALEMAGMVPDRTQSTQRERVGVFYGMFTQGGIRAFTPGRINYHFKFSGPSITVDTACSSSLAAIHVACNSLWRGDCDTAVAGGVNVLTNPDIFAGLDRGHFLSTTGNCKTFDDDADGYCRADGVGTVILKRLEDAIMDKDPILAVLNSAYTNHSAEAVSITRPHAGAQELIFSKLLRETGIHPHDVSYIEMHGTGTQAGDATEMSSVLRTFAPDTGRLSNQTLHLGSAKSNVGHGESASGVTSLIKVLLMMKHNTIPPHCGIKGRINHRFPTDLRERNVFIASQPVAWDKPHSGSGKRRVFINNFSAAGGNSALLLEDAPTRQHPETKDPRSTHIVAVSAKSSTALVNNLKRLKVFVQDNIHNLDLLAKLSYTTTARRIHYPFRAAITASSSDQLLQGIESILLRDESTKPATSQKNIGFVFSGQGAQYAGMGRHLFQNNETFRTQVLACNQICLSQGFPSILDIFNQGVEMNNLEPLVVQLGTTCLQMSLVSFWKSLGVTPDFCIGHSLGEYAALQAAGVLSVSDTIYLTGIRARLLQKKCSAGSHAMLAVRAPLAQVHGFFNPSIHEVTCLNSPHDVAIGGLVADIEDLERELAENNIEAVKVSVPFAFHSTQVEPILDEFCAAAESVQFQTQRIPVISTLLGEVVLPEAKAVFGPEYLKRHCREPVNFTAAAQAGKDANIINSASVFIEIGPHTVCSALLKSNIGPNAVTLPSLHRKDDGWKVLADTLAGLYHSGLRINWDEFHRDFESCQEVLQLPSYCWDNKNYWIQYVHNWTLTKGDPPATTAQTPALELPENSTSSVQKVIQQTDGPGPFVTIVVQSDFGSPRLAEVAEGHKVNGEMLCTSSLYAEIGMTLGRQLLEKYRPDLQGYSTEIEDMSVDKPLILKEKNKETLFRAEVVHDKSTLTAAMSIYSVDSAGKKTVDHAHCILRFADPKSWLDEWERTYYSIERSVRWLEARVEQGTDSLLSKGIVYKLFSSLVDYSPSFKGLQEVILNSSDREATAKVRLQAEKEDFDYNPMWIDSFGQLTGFLMNGHDFTEKDQVFINHGWRSMRCAKQFRKDAVYRTYICMQNVDKTKYCGDLYIIEDGVIIAVFGGMTVLPPRRGADAIHTPNPVAAAPAGLVASTKAHVRRPLDIPTRAQRQASSPQSGAIHRILVILAEEVGLSLETLTDDLVFADYGVDSLLSLTITGRIREELDLDVDSSTFTNCSTLGELRLFLAADQKLDDAVACESSNGQHTPQTSDKGSGTLTAQKPDHDTDSEMTLNRVCAIIAEEVGISVEELSSSQDFQELGIDSLSALTILSRVREELQLDLESDFFDTHPSFYSLQKTLRGTEGASNRTLEPNGAIPSRHDLKSDLGNIEWQSGQNIVASAPHATSILVSGSPSTARMILVLFPDGSGSAASYGALAPKIRKDIAVYALNCPWRTNGEEILRLGVSLDQMVAKHLIEVRRILDNHQQSRLNGSIDLALGGWSAGGILAIEGVRQLRQTGIVVQKLVLLDAPNPIGLQNPPPRMFHFLDELGILGAGTGKAPTWVLQHFDAMVNLLKSYRPRPLSAESAPKSLIVYAKDGVCKDPKGPQMDTKPDDAREMLWLLYDRVDFSAEGWKSLVGQQNLVVGVVEDVNHFSMMNPGPKIIEMSNLIGDFLLGLN.

The 417-residue stretch at 109 to 525 folds into the Ketosynthase family 3 (KS3) domain; that stretch reads DSKIAIIGMS…GGNSALLLED (417 aa). Residues Cys-264, His-399, and His-441 each act as for beta-ketoacyl synthase activity in the active site. Residues 626–931 form a malonyl-CoA:ACP transacylase (MAT) domain region; it reads GFVFSGQGAQ…PSLHRKDDGW (306 aa). The For acyl/malonyl transferase activity role is filled by Ser-716. Residues 1008 to 1312 form a product template (PT) domain region; the sequence is TSSVQKVIQQ…VFGGMTVLPP (305 aa). Residues 1012 to 1146 are N-terminal hotdog fold; the sequence is QKVIQQTDGP…CILRFADPKS (135 aa). Residues 1012–1318 enclose the PKS/mFAS DH domain; sequence QKVIQQTDGP…VLPPRRGADA (307 aa). His-1045 (proton acceptor; for dehydratase activity) is an active-site residue. The interval 1174–1318 is C-terminal hotdog fold; the sequence is DSLLSKGIVY…VLPPRRGADA (145 aa). Asp-1232 serves as the catalytic Proton donor; for dehydratase activity. Positions 1356–1433 constitute a Carrier 1 domain; that stretch reads SPQSGAIHRI…ELRLFLAADQ (78 aa). Ser-1393 carries the post-translational modification O-(pantetheine 4'-phosphoryl)serine. A disordered region spans residues 1441 to 1470; it reads CESSNGQHTPQTSDKGSGTLTAQKPDHDTD. Over residues 1442 to 1462 the composition is skewed to polar residues; that stretch reads ESSNGQHTPQTSDKGSGTLTA. One can recognise a Carrier 2 domain in the interval 1472–1546; it reads EMTLNRVCAI…SLQKTLRGTE (75 aa). O-(pantetheine 4'-phosphoryl)serine is present on Ser-1506. Residues 1582-1855 are thioesterase (TE) domain; the sequence is ASAPHATSIL…IIEMSNLIGD (274 aa). The active-site For thioesterase activity is the Ser-1685.

In terms of biological role, polyketide synthase; part of the Pks2 gene cluster that mediates the formation of infectious structures (appressoria), enabling these fungi to kill insects faster. The product of the Pks2 gene cluster is different from the one of Pks1 and has still not been identified. This Metarhizium acridum (strain CQMa 102) protein is Polyketide synthase 2.